We begin with the raw amino-acid sequence, 810 residues long: Phospholipase D alpha 2 (810 aa).

The C2 domain occupies 1-126 (MEECLLHGRL…LHGEEVDRWV (126 aa)). A Ca(2+)-binding site is contributed by Asp187. The 39-residue stretch at 327 to 365 (TMFTHHQKIVVVDSEMPSGGSRSRRIVSFVGGLDLCDGR) folds into the PLD phosphodiesterase 1 domain. Residues His332, Lys334, and Asp339 contribute to the active site. Residue His332 coordinates a 1,2-diacyl-sn-glycero-3-phosphate. Residues His371 and His405 each contribute to the Ca(2+) site. Gln521 and His661 together coordinate a 1,2-diacyl-sn-glycero-3-phosphate. In terms of domain architecture, PLD phosphodiesterase 2 spans 656–683 (FMIYVHTKMMIVDDEYIIIGSANINQRS). Active-site residues include His661, Lys663, and Asp668. Glu722 contacts Ca(2+).

The protein belongs to the phospholipase D family. C2-PLD subfamily. The cofactor is Ca(2+). Highly expressed in roots, stems and flowers, moderately in leaves, seedlings and siliques. Not detected in dry seeds.

The protein localises to the cytoplasm. Its subcellular location is the membrane. The protein resides in the vacuole. It localises to the cytoplasmic vesicle. It is found in the clathrin-coated vesicle. The catalysed reaction is a 1,2-diacyl-sn-glycero-3-phosphocholine + H2O = a 1,2-diacyl-sn-glycero-3-phosphate + choline + H(+). In terms of biological role, hydrolyzes glycerol-phospholipids at the terminal phosphodiesteric bond to generate phosphatidic acids (PA). Plays an important role in various cellular processes, including phytohormone action and response to stress, characterized by acidification of the cell. In Arabidopsis thaliana (Mouse-ear cress), this protein is Phospholipase D alpha 2.